Here is a 399-residue protein sequence, read N- to C-terminus: Homeobox protein ceh-39 (399 aa).

Disordered stretches follow at residues 32 to 91 (PEPA…GDTE) and 158 to 187 (AKKS…RPAS). The span at 60–79 (SSMCGSSSSSSSSSYSSGSS) shows a compositional bias: low complexity. Positions 205–291 (NRQIGDDEEL…VRRALCFMKK (87 aa)) form a DNA-binding region, CUT. Residues 315–374 (SDERIRRFTFTQTQLDSLHTVFQQQDRPNREMQQALSATLKLNRSTVGNFFMNARRRLPK) constitute a DNA-binding region (homeobox).

The protein belongs to the CUT homeobox family. Expressed in hermaphrodite gonads.

Its subcellular location is the nucleus. The protein localises to the chromosome. Transcriptional regulator which is involved in the sex determination and X chromosome dosage compensation pathways. Directly binds to 5'-ATTGAT-3' sites in the promoter of sex-determining factor xol-1 to negatively regulate its expression and promote hermaphrodite development. Associates with condensed DNA during mitosis. This chain is Homeobox protein ceh-39, found in Caenorhabditis elegans.